The sequence spans 367 residues: Quinolinate synthase (367 aa).

Residues His-45 and Ser-62 each contribute to the iminosuccinate site. Cys-109 contributes to the [4Fe-4S] cluster binding site. Iminosuccinate-binding positions include 140-142 (YVN) and Ser-161. Residue Cys-229 coordinates [4Fe-4S] cluster. Iminosuccinate contacts are provided by residues 255–257 (HPE) and Thr-272. Cys-319 provides a ligand contact to [4Fe-4S] cluster.

This sequence belongs to the quinolinate synthase family. Type 3 subfamily. [4Fe-4S] cluster serves as cofactor.

It localises to the cytoplasm. The enzyme catalyses iminosuccinate + dihydroxyacetone phosphate = quinolinate + phosphate + 2 H2O + H(+). It functions in the pathway cofactor biosynthesis; NAD(+) biosynthesis; quinolinate from iminoaspartate: step 1/1. Functionally, catalyzes the condensation of iminoaspartate with dihydroxyacetone phosphate to form quinolinate. The protein is Quinolinate synthase of Geobacillus sp. (strain WCH70).